Consider the following 478-residue polypeptide: Alpha-(1,3)-fucosyltransferase FucT (478 aa).

Substrate contacts are provided by residues Gly94, 186–189 (VASN), Arg195, 222–225 (VKNK), Asn240, and 246–250 (YVTEK). The segment at 347 to 353 (DNPFIFC) is important for acceptor specificity. Tandem repeats lie at residues 364 to 370 (DDLRVNY), 371 to 377 (DDLRVNY), 378 to 384 (DDLRINY), 385 to 391 (DDLRVNY), 392 to 398 (DDLRINY), 399 to 405 (DDLRVNY), 406 to 412 (DDLRVNY), 413 to 419 (DDLRINY), 420 to 426 (DDLRVNY), and 427 to 433 (DDLRVNY). The interval 364–433 (DDLRVNYDDL…VNYDDLRVNY (70 aa)) is 10 X 7 AA tandem repeat of D-D-L-R-[IV]-N-Y. The interval 434–478 (ERLLSKATPLLELSQNTTSKIYRKAYQKSLPLLRAIRRWVKKLGL) is may be involved in membrane binding.

It belongs to the glycosyltransferase 10 family. Homodimer.

It is found in the membrane. The protein localises to the cytoplasm. It catalyses the reaction a beta-D-galactosyl-(1-&gt;4)-N-acetyl-beta-D-glucosaminyl derivative + GDP-beta-L-fucose = a beta-D-galactosyl-(1-&gt;4)-[alpha-L-fucosyl-(1-&gt;3)]-N-acetyl-beta-D-glucosaminyl derivative + GDP + H(+). The protein operates within lipopolysaccharide biosynthesis; LPS oligosaccharide biosynthesis. Involved in the biosynthesis of the Lewis X (LeX) trisaccharide of the lipopolysaccharide (LPS) O-antigen. Catalyzes the addition of fucose in alpha 1-3 linkage to Gal-beta-1-4-GlcNAc-beta-O-R (LacNAc-R) type II acceptor. This is Alpha-(1,3)-fucosyltransferase FucT from Helicobacter pylori (Campylobacter pylori).